The primary structure comprises 248 residues: 2,3-bisphosphoglycerate-dependent phosphoglycerate mutase (248 aa).

Substrate is bound by residues R8 to N15, T21 to G22, R60, E87 to Y90, K98, R114 to R115, and G183 to N184. H9 (tele-phosphohistidine intermediate) is an active-site residue. The Proton donor/acceptor role is filled by E87.

It belongs to the phosphoglycerate mutase family. BPG-dependent PGAM subfamily.

The catalysed reaction is (2R)-2-phosphoglycerate = (2R)-3-phosphoglycerate. It functions in the pathway carbohydrate degradation; glycolysis; pyruvate from D-glyceraldehyde 3-phosphate: step 3/5. In terms of biological role, catalyzes the interconversion of 2-phosphoglycerate and 3-phosphoglycerate. This Elusimicrobium minutum (strain Pei191) protein is 2,3-bisphosphoglycerate-dependent phosphoglycerate mutase.